Consider the following 832-residue polypeptide: tRNA ligase (832 aa).

The active-site N6-AMP-lysine intermediate is Lys-108.

The protein belongs to the TRL1 family.

It catalyses the reaction ATP + (ribonucleotide)n-3'-hydroxyl + 5'-phospho-(ribonucleotide)m = (ribonucleotide)n+m + AMP + diphosphate.. One of the two proteins required for the splicing of precursor tRNA molecules containing introns. The ligation activity requires three enzymatic activities: phosphorylation of the 5' terminus of the 3' half-tRNA in the presence of ATP, opening of the 2'3'-cyclic phosphodiester bond of the 5' half-tRNA leaving a 2'-phosphomonoester and ligation of the two tRNA halves in an ATP-dependent reaction. In Candida albicans (strain SC5314 / ATCC MYA-2876) (Yeast), this protein is tRNA ligase (LIG1).